A 39-amino-acid polypeptide reads, in one-letter code: Large ribosomal subunit protein bL36 (39 aa).

This sequence belongs to the bacterial ribosomal protein bL36 family.

This Pediococcus pentosaceus (strain ATCC 25745 / CCUG 21536 / LMG 10740 / 183-1w) protein is Large ribosomal subunit protein bL36.